Consider the following 484-residue polypeptide: tRNA sulfurtransferase (484 aa).

Residues 56 to 158 (NCLKKALSKV…GNRAYFYTEV (103 aa)) enclose the THUMP domain. Residues 176–177 (LV), K257, G279, and Q288 each bind ATP. A disulfide bridge connects residues C336 and C444. The 84-residue stretch at 396-479 (APEGAVIVDL…TRNAVPPSSQ (84 aa)) folds into the Rhodanese domain. C444 acts as the Cysteine persulfide intermediate in catalysis.

Belongs to the ThiI family.

It is found in the cytoplasm. It carries out the reaction [ThiI sulfur-carrier protein]-S-sulfanyl-L-cysteine + a uridine in tRNA + 2 reduced [2Fe-2S]-[ferredoxin] + ATP + H(+) = [ThiI sulfur-carrier protein]-L-cysteine + a 4-thiouridine in tRNA + 2 oxidized [2Fe-2S]-[ferredoxin] + AMP + diphosphate. The catalysed reaction is [ThiS sulfur-carrier protein]-C-terminal Gly-Gly-AMP + S-sulfanyl-L-cysteinyl-[cysteine desulfurase] + AH2 = [ThiS sulfur-carrier protein]-C-terminal-Gly-aminoethanethioate + L-cysteinyl-[cysteine desulfurase] + A + AMP + 2 H(+). The protein operates within cofactor biosynthesis; thiamine diphosphate biosynthesis. Its function is as follows. Catalyzes the ATP-dependent transfer of a sulfur to tRNA to produce 4-thiouridine in position 8 of tRNAs, which functions as a near-UV photosensor. Also catalyzes the transfer of sulfur to the sulfur carrier protein ThiS, forming ThiS-thiocarboxylate. This is a step in the synthesis of thiazole, in the thiamine biosynthesis pathway. The sulfur is donated as persulfide by IscS. The protein is tRNA sulfurtransferase of Pyrobaculum aerophilum (strain ATCC 51768 / DSM 7523 / JCM 9630 / CIP 104966 / NBRC 100827 / IM2).